Here is a 252-residue protein sequence, read N- to C-terminus: Flavin-dependent thymidylate synthase (252 aa).

Residues 7–235 enclose the ThyX domain; it reads LDVQLVACST…PTVFSDFETS (229 aa). DUMP is bound by residues 94–97, 105–109, and Arg-174; these read ELVR and QLSQR. Residues 97 to 99 and Gln-105 each bind FAD; that span reads RHR. The ThyX motif signature appears at 97–107; sequence RHRHFSFSQLS. Residues 190 to 192 and His-196 contribute to the FAD site; that span reads NFR. Residue Arg-201 coordinates dUMP. The active-site Involved in ionization of N3 of dUMP, leading to its activation is Arg-201.

It belongs to the thymidylate synthase ThyX family. Homotetramer. Requires FAD as cofactor.

The catalysed reaction is dUMP + (6R)-5,10-methylene-5,6,7,8-tetrahydrofolate + NADPH + H(+) = dTMP + (6S)-5,6,7,8-tetrahydrofolate + NADP(+). Its pathway is pyrimidine metabolism; dTTP biosynthesis. Functionally, catalyzes the reductive methylation of 2'-deoxyuridine-5'-monophosphate (dUMP) to 2'-deoxythymidine-5'-monophosphate (dTMP) while utilizing 5,10-methylenetetrahydrofolate (mTHF) as the methyl donor, and NADPH and FADH(2) as the reductant. The protein is Flavin-dependent thymidylate synthase of Corynebacterium diphtheriae (strain ATCC 700971 / NCTC 13129 / Biotype gravis).